We begin with the raw amino-acid sequence, 241 residues long: Acetoacetyl-CoA reductase (241 aa).

NADP(+)-binding positions include Arg12–Ile14, Arg39, and Asn82–Thr86. Residues Asp88 and Gln141–Gln144 each bind substrate. The Proton acceptor role is filled by Tyr147. NADP(+) is bound at residue Pro177 to Ile180. Gly178–Tyr179 provides a ligand contact to substrate.

This sequence belongs to the short-chain dehydrogenases/reductases (SDR) family.

It localises to the cytoplasm. The enzyme catalyses a (3R)-3-hydroxyacyl-CoA + NADP(+) = a 3-oxoacyl-CoA + NADPH + H(+). It functions in the pathway biopolymer metabolism; poly-(R)-3-hydroxybutanoate biosynthesis. In Rhizobium meliloti (strain 1021) (Ensifer meliloti), this protein is Acetoacetyl-CoA reductase.